The following is a 189-amino-acid chain: Putative transcription factor ovo-like protein 3 (189 aa).

The interval 1–20 (MPRVFLVRSRRPQPPNWSHL) is disordered. 4 C2H2-type zinc fingers span residues 69 to 91 (LGCP…LKCH), 97 to 119 (HVCH…MRTH), 125 to 148 (FRCG…AKVH), and 164 to 186 (HVCE…RTLH).

It belongs to the krueppel C2H2-type zinc-finger protein family.

It is found in the nucleus. Functionally, may act as a transcription regulator. The sequence is that of Putative transcription factor ovo-like protein 3 (Ovol3) from Mus musculus (Mouse).